Here is a 79-residue protein sequence, read N- to C-terminus: MSSIEERVKKIVVEQLGVKEEEVSGEASFVDDLGADSLDTVELVMALEEEFECEIPDEEAEKITTVQQAVDYINKHLGS.

The region spanning 2 to 77 (SSIEERVKKI…QAVDYINKHL (76 aa)) is the Carrier domain. Serine 37 carries the post-translational modification O-(pantetheine 4'-phosphoryl)serine.

It belongs to the acyl carrier protein (ACP) family. 4'-phosphopantetheine is transferred from CoA to a specific serine of apo-ACP by AcpS. This modification is essential for activity because fatty acids are bound in thioester linkage to the sulfhydryl of the prosthetic group.

The protein localises to the cytoplasm. It functions in the pathway lipid metabolism; fatty acid biosynthesis. Carrier of the growing fatty acid chain in fatty acid biosynthesis. The chain is Acyl carrier protein from Alkalilimnicola ehrlichii (strain ATCC BAA-1101 / DSM 17681 / MLHE-1).